Here is a 217-residue protein sequence, read N- to C-terminus: Protein-L-isoaspartate O-methyltransferase (217 aa).

Serine 64 is an active-site residue.

It belongs to the methyltransferase superfamily. L-isoaspartyl/D-aspartyl protein methyltransferase family.

The protein resides in the cytoplasm. It carries out the reaction [protein]-L-isoaspartate + S-adenosyl-L-methionine = [protein]-L-isoaspartate alpha-methyl ester + S-adenosyl-L-homocysteine. In terms of biological role, catalyzes the methyl esterification of L-isoaspartyl residues in peptides and proteins that result from spontaneous decomposition of normal L-aspartyl and L-asparaginyl residues. It plays a role in the repair and/or degradation of damaged proteins. This is Protein-L-isoaspartate O-methyltransferase from Rhodopseudomonas palustris (strain BisB5).